Reading from the N-terminus, the 85-residue chain is Small ribosomal subunit protein uS12m (85 aa).

Belongs to the universal ribosomal protein uS12 family.

It localises to the mitochondrion matrix. The protein resides in the kinetoplast. Functionally, protein S12 is involved in the translation initiation step. This is Small ribosomal subunit protein uS12m (RPS12) from Leishmania tarentolae (Sauroleishmania tarentolae).